The following is a 322-amino-acid chain: Serine protease Lpg1137 (322 aa).

Ser-68 is a catalytic residue.

The protein localises to the secreted. Its subcellular location is the host mitochondrion membrane. Its function is as follows. Serine protease effector that inhibits host cell autophagy by targeting SNX17. Localizes to the host endoplasmic reticulum-mitochondria contact site and catalyzes degradation of host SNX17, thereby impairing endoplasmic reticulum-mitochondria communication, leading to inhibit autophagy as well as staurosporine-induced apoptosis. This is Serine protease Lpg1137 from Legionella pneumophila subsp. pneumophila (strain Philadelphia 1 / ATCC 33152 / DSM 7513).